A 133-amino-acid chain; its full sequence is Small ribosomal subunit protein uS8 (133 aa).

Belongs to the universal ribosomal protein uS8 family. In terms of assembly, part of the 30S ribosomal subunit. Contacts proteins S5 and S12.

One of the primary rRNA binding proteins, it binds directly to 16S rRNA central domain where it helps coordinate assembly of the platform of the 30S subunit. The protein is Small ribosomal subunit protein uS8 of Thermosynechococcus vestitus (strain NIES-2133 / IAM M-273 / BP-1).